A 331-amino-acid chain; its full sequence is Phenylalanine--tRNA ligase alpha subunit (331 aa).

Glu254 contacts Mg(2+).

It belongs to the class-II aminoacyl-tRNA synthetase family. Phe-tRNA synthetase alpha subunit type 1 subfamily. Tetramer of two alpha and two beta subunits. Mg(2+) is required as a cofactor.

It is found in the cytoplasm. The enzyme catalyses tRNA(Phe) + L-phenylalanine + ATP = L-phenylalanyl-tRNA(Phe) + AMP + diphosphate + H(+). This chain is Phenylalanine--tRNA ligase alpha subunit, found in Blochmanniella pennsylvanica (strain BPEN).